We begin with the raw amino-acid sequence, 124 residues long: Ribonuclease pancreatic (124 aa).

The segment covering 1–15 has biased composition (basic and acidic residues); the sequence is KESPAKKFQRQHMDP. Residues 1 to 24 are disordered; it reads KESPAKKFQRQHMDPDSSSSNSSN. Positions 7 and 10 each coordinate substrate. The active-site Proton acceptor is the histidine 12. 2 N-linked (GlcNAc...) asparagine glycosylation sites follow: asparagine 21 and asparagine 34. 4 disulfide bridges follow: cysteine 26–cysteine 84, cysteine 40–cysteine 95, cysteine 58–cysteine 110, and cysteine 65–cysteine 72. Residues 41–45 and lysine 66 each bind substrate; that span reads KPVNT. A glycan (N-linked (GlcNAc...) asparagine) is linked at asparagine 76. Arginine 85 contacts substrate. The active-site Proton donor is histidine 119.

The protein belongs to the pancreatic ribonuclease family. Monomer. Interacts with and forms tight 1:1 complexes with RNH1. Dimerization of two such complexes may occur. Interaction with RNH1 inhibits this protein. Pancreas.

Its subcellular location is the secreted. It carries out the reaction an [RNA] containing cytidine + H2O = an [RNA]-3'-cytidine-3'-phosphate + a 5'-hydroxy-ribonucleotide-3'-[RNA].. The enzyme catalyses an [RNA] containing uridine + H2O = an [RNA]-3'-uridine-3'-phosphate + a 5'-hydroxy-ribonucleotide-3'-[RNA].. In terms of biological role, endonuclease that catalyzes the cleavage of RNA on the 3' side of pyrimidine nucleotides. Acts on single-stranded and double-stranded RNA. The polypeptide is Ribonuclease pancreatic (RNASE1) (Sus scrofa (Pig)).